A 470-amino-acid polypeptide reads, in one-letter code: ATP-dependent protease ATPase subunit HslU (470 aa).

Residues Val22 and 64–69 each bind ATP; that span reads GVGKTE. Residues 145–187 form a disordered region; the sequence is KKANNNTNSNNPLESLFGGSIPNFGQNNDDEEETPTDEVKTKR. Asp283, Glu348, and Arg420 together coordinate ATP.

It belongs to the ClpX chaperone family. HslU subfamily. As to quaternary structure, a double ring-shaped homohexamer of HslV is capped on each side by a ring-shaped HslU homohexamer. The assembly of the HslU/HslV complex is dependent on binding of ATP.

The protein resides in the cytoplasm. Functionally, ATPase subunit of a proteasome-like degradation complex; this subunit has chaperone activity. The binding of ATP and its subsequent hydrolysis by HslU are essential for unfolding of protein substrates subsequently hydrolyzed by HslV. HslU recognizes the N-terminal part of its protein substrates and unfolds these before they are guided to HslV for hydrolysis. The protein is ATP-dependent protease ATPase subunit HslU of Staphylococcus saprophyticus subsp. saprophyticus (strain ATCC 15305 / DSM 20229 / NCIMB 8711 / NCTC 7292 / S-41).